The sequence spans 114 residues: Phosphoribosyl-AMP cyclohydrolase (114 aa).

Residue aspartate 76 participates in Mg(2+) binding. Residue cysteine 77 coordinates Zn(2+). Mg(2+)-binding residues include aspartate 78 and aspartate 80. Cysteine 93 and cysteine 100 together coordinate Zn(2+).

The protein belongs to the PRA-CH family. Homodimer. The cofactor is Mg(2+). Zn(2+) serves as cofactor.

It is found in the cytoplasm. It catalyses the reaction 1-(5-phospho-beta-D-ribosyl)-5'-AMP + H2O = 1-(5-phospho-beta-D-ribosyl)-5-[(5-phospho-beta-D-ribosylamino)methylideneamino]imidazole-4-carboxamide. Its pathway is amino-acid biosynthesis; L-histidine biosynthesis; L-histidine from 5-phospho-alpha-D-ribose 1-diphosphate: step 3/9. Its function is as follows. Catalyzes the hydrolysis of the adenine ring of phosphoribosyl-AMP. This chain is Phosphoribosyl-AMP cyclohydrolase, found in Streptococcus sanguinis (strain SK36).